Consider the following 704-residue polypeptide: mRNA (2'-O-methyladenosine-N(6)-)-methyltransferase (704 aa).

Residues 1–33 (MANENHGSPREEASLLSHSPGTSNQSQPCSPKP) form a disordered region. The span at 16–29 (LSHSPGTSNQSQPC) shows a compositional bias: polar residues. Phosphoserine is present on Ser30. Residues 43 to 77 (ELVHAGWEKCWSRRENRPYYFNRFTNQSLWEMPVL) enclose the WW domain. The tract at residues 88–151 (GLNATPLPQD…PSSPSIPGTP (64 aa)) is disordered. A Nuclear localization signal motif is present at residues 109 to 113 (KPRKR). Ser116 carries the post-translational modification Phosphoserine. Over residues 136–149 (PTGQSVPSSPSIPG) the composition is skewed to polar residues. The residue at position 152 (Thr152) is a Phosphothreonine. Substrate contacts are provided by Arg235 and Arg265. An S-adenosyl-L-methionine-binding site is contributed by 553-556 (NPPF). Substrate contacts are provided by residues Glu558 and 588 to 592 (WREPP). 614–616 (FEH) contacts S-adenosyl-L-methionine. Positions 663–704 (LSAAYRQSGRSHSSGSSSSSSSEAKDRDSGREQGPSREPHPT) are disordered. Residues 669 to 684 (QSGRSHSSGSSSSSSS) carry the Nuclear localization signal motif. A compositionally biased stretch (low complexity) spans 670–684 (SGRSHSSGSSSSSSS). The span at 685–704 (EAKDRDSGREQGPSREPHPT) shows a compositional bias: basic and acidic residues.

It belongs to the CAPAM family. As to quaternary structure, interacts with POLR2A; interacts with the phosphorylated C-terminal domain (CTD) of POLR2A. Ubiquitous.

It is found in the nucleus. The enzyme catalyses a 5'-end (N(7)-methyl 5'-triphosphoguanosine)-(2'-O-methyladenosine) in mRNA + S-adenosyl-L-methionine = a 5'-end (N(7)-methyl 5'-triphosphoguanosine)-(N(6),2'-O-dimethyladenosine) in mRNA + S-adenosyl-L-homocysteine + H(+). Cap-specific adenosine methyltransferase activity is inhibited by zinc. Functionally, cap-specific adenosine methyltransferase that catalyzes formation of N(6),2'-O-dimethyladenosine cap (m6A(m)) by methylating the adenosine at the second transcribed position of capped mRNAs. Recruited to the early elongation complex of RNA polymerase II (RNAPII) via interaction with POLR2A and mediates formation of m6A(m) co-transcriptionally. This Homo sapiens (Human) protein is mRNA (2'-O-methyladenosine-N(6)-)-methyltransferase.